The sequence spans 95 residues: Small ribosomal subunit protein uS15 (95 aa).

Belongs to the universal ribosomal protein uS15 family. Part of the 30S ribosomal subunit. Forms a bridge to the 50S subunit in the 70S ribosome, contacting the 23S rRNA.

Its function is as follows. One of the primary rRNA binding proteins, it binds directly to 16S rRNA where it helps nucleate assembly of the platform of the 30S subunit by binding and bridging several RNA helices of the 16S rRNA. Forms an intersubunit bridge (bridge B4) with the 23S rRNA of the 50S subunit in the ribosome. This is Small ribosomal subunit protein uS15 from Streptomyces coelicolor (strain ATCC BAA-471 / A3(2) / M145).